A 299-amino-acid chain; its full sequence is Hydroxymethylglutaryl-CoA lyase YngG (299 aa).

The Pyruvate carboxyltransferase domain occupies 7–274 (VTIKEVGPRD…KTNVKLEKLL (268 aa)). Residue Arg15 participates in substrate binding. Asp16, His207, and His209 together coordinate a divalent metal cation. Cys240 is a catalytic residue. Position 249 (Asn249) interacts with a divalent metal cation.

The protein belongs to the HMG-CoA lyase family. As to quaternary structure, homodimer and homotetramer.

It catalyses the reaction (3S)-3-hydroxy-3-methylglutaryl-CoA = acetoacetate + acetyl-CoA. Its pathway is metabolic intermediate metabolism; (S)-3-hydroxy-3-methylglutaryl-CoA degradation; acetoacetate from (S)-3-hydroxy-3-methylglutaryl-CoA: step 1/1. Its function is as follows. Involved in the catabolism of branched amino acids such as leucine. This Bacillus subtilis (strain 168) protein is Hydroxymethylglutaryl-CoA lyase YngG (yngG).